The sequence spans 409 residues: LL-diaminopimelate aminotransferase (409 aa).

Residues tyrosine 15 and glycine 42 each coordinate substrate. Pyridoxal 5'-phosphate contacts are provided by residues tyrosine 72, 108 to 109, tyrosine 132, asparagine 186, tyrosine 217, and 245 to 247; these read AK and SFS. Positions 109, 132, and 186 each coordinate substrate. An N6-(pyridoxal phosphate)lysine modification is found at lysine 248. Positions 256 and 291 each coordinate pyridoxal 5'-phosphate. Residues asparagine 291 and arginine 386 each coordinate substrate.

Belongs to the class-I pyridoxal-phosphate-dependent aminotransferase family. LL-diaminopimelate aminotransferase subfamily. As to quaternary structure, homodimer. Requires pyridoxal 5'-phosphate as cofactor.

The enzyme catalyses (2S,6S)-2,6-diaminopimelate + 2-oxoglutarate = (S)-2,3,4,5-tetrahydrodipicolinate + L-glutamate + H2O + H(+). It functions in the pathway amino-acid biosynthesis; L-lysine biosynthesis via DAP pathway; LL-2,6-diaminopimelate from (S)-tetrahydrodipicolinate (aminotransferase route): step 1/1. Its function is as follows. Involved in the synthesis of meso-diaminopimelate (m-DAP or DL-DAP), required for both lysine and peptidoglycan biosynthesis. Catalyzes the direct conversion of tetrahydrodipicolinate to LL-diaminopimelate. The polypeptide is LL-diaminopimelate aminotransferase (Desulforapulum autotrophicum (strain ATCC 43914 / DSM 3382 / VKM B-1955 / HRM2) (Desulfobacterium autotrophicum)).